The chain runs to 615 residues: Deoxyribodipyrimidine photo-lyase (615 aa).

Residues 1 to 53 (MAPSKRKASAPPQTSHVNGNPSADKKRKTTTDAPPTNPNTSSDPLRAPHPFYK) form a disordered region. Over residues 11–21 (PPQTSHVNGNP) the composition is skewed to polar residues. Over residues 31–40 (TDAPPTNPNT) the composition is skewed to low complexity. The Photolyase/cryptochrome alpha/beta domain occupies 108–249 (QAVVHWFKMD…AADVVHDTCV (142 aa)). Tyr-352 lines the FAD pocket. Arg-356 contributes to the DNA binding site. Position 364–368 (364–368 (TSNLS)) interacts with FAD. Interaction with DNA stretches follow at residues 407–414 (EVAWRDFY) and 474–475 (NR). 505–507 (DGD) contacts FAD. Gln-537 provides a ligand contact to DNA.

This sequence belongs to the DNA photolyase class-1 family. Monomer. Requires FAD as cofactor. The cofactor is (6R)-5,10-methylene-5,6,7,8-tetrahydrofolate.

The catalysed reaction is cyclobutadipyrimidine (in DNA) = 2 pyrimidine residues (in DNA).. In terms of biological role, involved in repair of UV radiation-induced DNA damage. Catalyzes the light-dependent monomerization (300-600 nm) of cyclobutyl pyrimidine dimers (in cis-syn configuration), which are formed between adjacent bases on the same DNA strand upon exposure to ultraviolet radiation. The polypeptide is Deoxyribodipyrimidine photo-lyase (phr) (Neurospora crassa (strain ATCC 24698 / 74-OR23-1A / CBS 708.71 / DSM 1257 / FGSC 987)).